A 184-amino-acid polypeptide reads, in one-letter code: ATP synthase subunit b, chloroplastic (184 aa).

Residues 31–53 traverse the membrane as a helical segment; it reads LINLSVVLGVLIYFGKGVLSNLL.

Belongs to the ATPase B chain family. As to quaternary structure, F-type ATPases have 2 components, F(1) - the catalytic core - and F(0) - the membrane proton channel. F(1) has five subunits: alpha(3), beta(3), gamma(1), delta(1), epsilon(1). F(0) has four main subunits: a(1), b(1), b'(1) and c(10-14). The alpha and beta chains form an alternating ring which encloses part of the gamma chain. F(1) is attached to F(0) by a central stalk formed by the gamma and epsilon chains, while a peripheral stalk is formed by the delta, b and b' chains.

It is found in the plastid. The protein localises to the chloroplast thylakoid membrane. Functionally, f(1)F(0) ATP synthase produces ATP from ADP in the presence of a proton or sodium gradient. F-type ATPases consist of two structural domains, F(1) containing the extramembraneous catalytic core and F(0) containing the membrane proton channel, linked together by a central stalk and a peripheral stalk. During catalysis, ATP synthesis in the catalytic domain of F(1) is coupled via a rotary mechanism of the central stalk subunits to proton translocation. In terms of biological role, component of the F(0) channel, it forms part of the peripheral stalk, linking F(1) to F(0). The polypeptide is ATP synthase subunit b, chloroplastic (Cycas taitungensis (Prince sago)).